Here is a 242-residue protein sequence, read N- to C-terminus: NAD(P)H-hydrate epimerase (242 aa).

Residues 11–221 (AKALDAELMS…KVITKKFNLS (211 aa)) enclose the YjeF N-terminal domain. A (6S)-NADPHX-binding site is contributed by 61–65 (NNGGD). Residues N62 and D128 each contribute to the K(+) site. Residues 132–138 (GFSFKGP) and D161 each bind (6S)-NADPHX. S164 contacts K(+).

The protein belongs to the NnrE/AIBP family. K(+) serves as cofactor.

It localises to the cytoplasm. It is found in the mitochondrion. The protein localises to the nucleus. It carries out the reaction (6R)-NADHX = (6S)-NADHX. The catalysed reaction is (6R)-NADPHX = (6S)-NADPHX. Catalyzes the epimerization of the S- and R-forms of NAD(P)HX, a damaged form of NAD(P)H that is a result of enzymatic or heat-dependent hydration. This is a prerequisite for the S-specific NAD(P)H-hydrate dehydratase to allow the repair of both epimers of NAD(P)HX. May have a role in meiosis. The protein is NAD(P)H-hydrate epimerase (mug182) of Schizosaccharomyces pombe (strain 972 / ATCC 24843) (Fission yeast).